The chain runs to 152 residues: Snaclec agkisacutacin subunit A (152 aa).

A signal peptide spans 1 to 23 (MGRFIFVSFGLLVVFLSLSGTAA). The C-type lectin domain maps to 24–152 (DCSSGWSSYE…EQQDPFVCEA (129 aa)). Cystine bridges form between cysteine 25–cysteine 36, cysteine 53–cysteine 150, and cysteine 125–cysteine 142. 3 residues coordinate Ca(2+): serine 64, glutamate 66, and glutamate 70. Glutamate 151 is a binding site for Ca(2+).

Belongs to the snaclec family. As to quaternary structure, heterodimer with subunit B of AaACP or agkisacutacin; disulfide-linked. Expressed by the venom gland.

Its subcellular location is the secreted. Anticoagulant protein which binds to the gamma-carboxyglutamic acid-domain regions of factors IX (F9) and factor X (F10) in the presence of calcium with a 1 to 1 stoichiometry. Also inhibits platelet aggregation by binding to platelet glycoprotein Ibalpha (GP1BA) and functioning as a blocker of von Willebrand factor (VWF). Is devoid of hemorrhagic and lethal activities. Possesses antithrombotic and thrombolytic activities. Also hydrolyzes the Aalpha-chain of fibrinogen (FGA). Does not affect the Bbeta-chain (FGB) and the gamma chain (FGG). This is Snaclec agkisacutacin subunit A from Deinagkistrodon acutus (Hundred-pace snake).